The following is a 459-amino-acid chain: Ribulose bisphosphate carboxylase large chain (459 aa).

Lysine 4 is modified (N6,N6,N6-trimethyllysine). The substrate site is built by asparagine 113 and threonine 163. The active-site Proton acceptor is the lysine 165. Lysine 167 provides a ligand contact to substrate. The Mg(2+) site is built by lysine 191, aspartate 193, and glutamate 194. Lysine 191 is subject to N6-carboxylysine. Residue histidine 284 is the Proton acceptor of the active site. The substrate site is built by arginine 285, histidine 317, and serine 369.

It belongs to the RuBisCO large chain family. Type I subfamily. Heterohexadecamer of 8 large chains and 8 small chains; disulfide-linked. The disulfide link is formed within the large subunit homodimers. It depends on Mg(2+) as a cofactor. Post-translationally, the disulfide bond which can form in the large chain dimeric partners within the hexadecamer appears to be associated with oxidative stress and protein turnover.

Its subcellular location is the plastid. It is found in the chloroplast. The catalysed reaction is 2 (2R)-3-phosphoglycerate + 2 H(+) = D-ribulose 1,5-bisphosphate + CO2 + H2O. It catalyses the reaction D-ribulose 1,5-bisphosphate + O2 = 2-phosphoglycolate + (2R)-3-phosphoglycerate + 2 H(+). RuBisCO catalyzes two reactions: the carboxylation of D-ribulose 1,5-bisphosphate, the primary event in carbon dioxide fixation, as well as the oxidative fragmentation of the pentose substrate in the photorespiration process. Both reactions occur simultaneously and in competition at the same active site. The chain is Ribulose bisphosphate carboxylase large chain from Cephalotus follicularis (Albany pitcher plant).